Consider the following 274-residue polypeptide: MGIRIYKPTSAGRRNMSVSTFEEITKKRPEPGLIEPLRKKAGRNNQGRITVRHRGGGHKRFYRIIDFKRDKFGIPAKVQAIEYDPNRSARIALLAYVDGEKRYIIAPLGLKVGDTVMSGPNAEIRVGNALPLGAIPLGTQIHNIELEIGRGGVLVRAAGTAAQLMAKEGDYATIRMPSGEVRMIHLRCMATIGQVGNVDHQNIRLGKAGRSRWLGRRPRVRGAAMNPRDHPHGGGEGRAPRGMSTPKTKWGKPARGVKTRHNPRFDRFIIRRRK.

A disordered region spans residues 220–259 (VRGAAMNPRDHPHGGGEGRAPRGMSTPKTKWGKPARGVKT). Positions 227–239 (PRDHPHGGGEGRA) are enriched in basic and acidic residues. A compositionally biased stretch (basic residues) spans 249 to 259 (KWGKPARGVKT).

It belongs to the universal ribosomal protein uL2 family. As to quaternary structure, part of the 50S ribosomal subunit. Forms a bridge to the 30S subunit in the 70S ribosome.

One of the primary rRNA binding proteins. Required for association of the 30S and 50S subunits to form the 70S ribosome, for tRNA binding and peptide bond formation. It has been suggested to have peptidyltransferase activity; this is somewhat controversial. Makes several contacts with the 16S rRNA in the 70S ribosome. In Chloroflexus aggregans (strain MD-66 / DSM 9485), this protein is Large ribosomal subunit protein uL2.